The chain runs to 387 residues: Odorant receptor 19a (387 aa).

Residues 1 to 40 (MDISKVDSTRALVNHWRIFRIMGIHPPGKRTFWGRHYTAY) are Cytoplasmic-facing. The chain crosses the membrane as a helical span at residues 41 to 61 (SMVWNVTFHICIWVSFSVNLL). At 62–71 (QSNSLETFCE) the chain is on the extracellular side. The chain crosses the membrane as a helical span at residues 72–92 (SLCVTMPHTLYMLKLINVRRM). Residues 93–127 (RGQMISSHWLLRLLDKRLGCDDERQIIMAGIERAE) are Cytoplasmic-facing. Residues 128–148 (FIFRTIFRGLACTVVLGIIYI) traverse the membrane as a helical segment. The Extracellular segment spans residues 149–171 (SASSEPTLMYPTWIPWNWRDSTS). Residues 172–192 (AYLATAMLHTTALMANATLVL) traverse the membrane as a helical segment. The Cytoplasmic segment spans residues 193–254 (NLSSYPGTYL…LRLFKSLERS (62 aa)). A helical transmembrane segment spans residues 255 to 275 (LSMTCFLQFFSTACAQCTICY). The Extracellular segment spans residues 276-285 (FLLFGNVGIM). The chain crosses the membrane as a helical span at residues 286–306 (RFMNMLFLLVILTTETLLLCY). Residues 307 to 336 (TAELPCKEGESLLTAVYSCNWLSQSVNFRR) lie on the Cytoplasmic side of the membrane. The helical transmembrane segment at 337–357 (LLLLMLARCQIPMILVSGVIV) threads the bilayer. The Extracellular portion of the chain corresponds to 358-387 (PISMKTFTVMIKGAYTMLTLLNEIRKTSLE).

This sequence belongs to the insect chemoreceptor superfamily. Heteromeric odorant receptor channel (TC 1.A.69) family. Or2a subfamily. Interacts with Orco. Complexes exist early in the endomembrane system in olfactory sensory neurons (OSNs), coupling these complexes to the conserved ciliary trafficking pathway. Expressed in ai2A olfactory sensory neurons in the antenna.

The protein localises to the cell membrane. Functionally, odorant receptor which mediates acceptance or avoidance behavior, depending on its substrates. The odorant receptor repertoire encodes a large collection of odor stimuli that vary widely in identity, intensity, and duration. May form a complex with Orco to form odorant-sensing units, providing sensitive and prolonged odorant signaling and calcium permeability. Involved in the preference for citrus fruits for oviposition, especially through the response to valencene, the primary ligand of Or19a. Larvae growing on citrus fruits suffer a reduced risk of parasitism since endoparasitoid wasps that parasitize larvae are strongly repelled by the smell of citrus, as well as by valencene. This is Odorant receptor 19a (Or19a) from Drosophila melanogaster (Fruit fly).